The chain runs to 178 residues: Adenine phosphoribosyltransferase (178 aa).

This sequence belongs to the purine/pyrimidine phosphoribosyltransferase family. Homodimer.

It localises to the cytoplasm. The catalysed reaction is AMP + diphosphate = 5-phospho-alpha-D-ribose 1-diphosphate + adenine. It functions in the pathway purine metabolism; AMP biosynthesis via salvage pathway; AMP from adenine: step 1/1. In terms of biological role, catalyzes a salvage reaction resulting in the formation of AMP, that is energically less costly than de novo synthesis. The polypeptide is Adenine phosphoribosyltransferase (Erythrobacter litoralis (strain HTCC2594)).